We begin with the raw amino-acid sequence, 356 residues long: Homoserine O-acetyltransferase (356 aa).

The AB hydrolase-1 domain maps to 50-335 (NVILVCHALT…DEPYGHDAFL (286 aa)). S146 serves as the catalytic Nucleophile. R215 contributes to the substrate binding site. Active-site residues include D302 and H331. D332 is a substrate binding site.

The protein belongs to the AB hydrolase superfamily. MetX family. In terms of assembly, homodimer.

The protein localises to the cytoplasm. The catalysed reaction is L-homoserine + acetyl-CoA = O-acetyl-L-homoserine + CoA. The protein operates within amino-acid biosynthesis; L-methionine biosynthesis via de novo pathway; O-acetyl-L-homoserine from L-homoserine: step 1/1. In terms of biological role, transfers an acetyl group from acetyl-CoA to L-homoserine, forming acetyl-L-homoserine. This is Homoserine O-acetyltransferase from Chlorobaculum tepidum (strain ATCC 49652 / DSM 12025 / NBRC 103806 / TLS) (Chlorobium tepidum).